We begin with the raw amino-acid sequence, 89 residues long: Phosphocarrier protein HPr (89 aa).

The region spanning 2-89 is the HPr domain; that stretch reads AKFSAIITDK…TMIDTALIQG (88 aa). Residue H15 is the Pros-phosphohistidine intermediate of the active site. The residue at position 46 (S46) is a Phosphoserine; by HPrK/P.

This sequence belongs to the HPr family.

It localises to the cytoplasm. Its activity is regulated as follows. Phosphorylation on Ser-46 inhibits the phosphoryl transfer from enzyme I to HPr. Its function is as follows. General (non sugar-specific) component of the phosphoenolpyruvate-dependent sugar phosphotransferase system (sugar PTS). This major carbohydrate active-transport system catalyzes the phosphorylation of incoming sugar substrates concomitantly with their translocation across the cell membrane. The phosphoryl group from phosphoenolpyruvate (PEP) is transferred to the phosphoryl carrier protein HPr by enzyme I. Phospho-HPr then transfers it to the PTS EIIA domain. Functionally, P-Ser-HPr interacts with the catabolite control protein A (CcpA), forming a complex that binds to DNA at the catabolite response elements cre, operator sites preceding a large number of catabolite-regulated genes. Thus, P-Ser-HPr is a corepressor in carbon catabolite repression (CCR), a mechanism that allows bacteria to coordinate and optimize the utilization of available carbon sources. P-Ser-HPr also plays a role in inducer exclusion, in which it probably interacts with several non-PTS permeases and inhibits their transport activity. This is Phosphocarrier protein HPr (ptsH) from Mycoplasma capricolum subsp. capricolum (strain California kid / ATCC 27343 / NCTC 10154).